The sequence spans 414 residues: Putative truncated GMC-type inactive oxidoreductase R832 (414 aa).

The signal sequence occupies residues 1–20; the sequence is MNPTKLFLVFVAFAFAIINA. An FAD-binding site is contributed by 38–67; it reads DYIIVGSGPGGSRAVQQCIAKGHKCTLVER.

Belongs to the GMC oxidoreductase family. FAD serves as cofactor.

The polypeptide is Putative truncated GMC-type inactive oxidoreductase R832 (Acanthamoeba polyphaga (Amoeba)).